Consider the following 63-residue polypeptide: AQIDCDKECNRRCSKASAHDRCLKYCGICCKKCHCVPPGTAGNEDVCPCYANLKNSKGGHKCP.

The protein belongs to the GASA family. Expressed in pollen (at protein level).

The sequence is that of Cypmaclein from Juniperus ashei (Ozark white cedar).